Here is a 771-residue protein sequence, read N- to C-terminus: Ribonucleoside-diphosphate reductase large subunit (771 aa).

Residues 1 to 92 enclose the ATP-cone domain; the sequence is MFVIKRNGYK…ISNLHKETKK (92 aa). ATP is bound by residues 5 to 6, 11 to 17, Thr53, Asp57, and Lys88; these read KR and ENVMFDK. GDP-binding residues include Ser202 and Ser217. Residues 226–228, Lys243, and Arg256 contribute to the dTTP site; that span reads DSI. Asn427 contacts GDP. Catalysis depends on Asn427, which acts as the Proton acceptor. Cys429 (cysteine radical intermediate) is an active-site residue. GDP is bound by residues Glu431 and 603–606; that span reads TAST. Glu431 serves as the catalytic Proton acceptor.

Belongs to the ribonucleoside diphosphate reductase large chain family. In terms of assembly, interacts with RNR2/OPG047 subunit. Mg(2+) serves as cofactor.

It carries out the reaction a 2'-deoxyribonucleoside 5'-diphosphate + [thioredoxin]-disulfide + H2O = a ribonucleoside 5'-diphosphate + [thioredoxin]-dithiol. Its function is as follows. Ribonucleoside-diphosphate reductase holoenzyme provides the precursors necessary for viral DNA synthesis. Allows virus growth in non-dividing cells. Catalyzes the biosynthesis of deoxyribonucleotides from the corresponding ribonucleotides. This Monkeypox virus protein is Ribonucleoside-diphosphate reductase large subunit (OPG080).